Here is a 290-residue protein sequence, read N- to C-terminus: Agmatinase (290 aa).

The Mn(2+) site is built by H112, D135, H137, D139, D216, and D218.

The protein belongs to the arginase family. Agmatinase subfamily. It depends on Mn(2+) as a cofactor.

It catalyses the reaction agmatine + H2O = urea + putrescine. It functions in the pathway amine and polyamine biosynthesis; putrescine biosynthesis via agmatine pathway; putrescine from agmatine: step 1/1. Functionally, catalyzes the formation of putrescine from agmatine. This is Agmatinase (speB) from Bacillus cereus (strain ATCC 14579 / DSM 31 / CCUG 7414 / JCM 2152 / NBRC 15305 / NCIMB 9373 / NCTC 2599 / NRRL B-3711).